The sequence spans 906 residues: Probable helicase HelY (906 aa).

In terms of domain architecture, Helicase ATP-binding spans 26–184 (CSALERGHGV…WIQTVRGDTT (159 aa)). ATP is bound at residue 39-46 (APTGAGKT). Positions 132 to 135 (DEVH) match the DEVH box motif. The Helicase C-terminal domain occupies 259–463 (GRPEVIAKLD…SYNMTINLVH (205 aa)).

It belongs to the helicase family. SKI2 subfamily.

The polypeptide is Probable helicase HelY (helY) (Mycobacterium tuberculosis (strain CDC 1551 / Oshkosh)).